The chain runs to 159 residues: D-aminoacyl-tRNA deacylase (159 aa).

Positions 142-143 match the Gly-cisPro motif, important for rejection of L-amino acids motif; that stretch reads GP.

Belongs to the DTD family. As to quaternary structure, homodimer.

The protein localises to the cytoplasm. It catalyses the reaction glycyl-tRNA(Ala) + H2O = tRNA(Ala) + glycine + H(+). The enzyme catalyses a D-aminoacyl-tRNA + H2O = a tRNA + a D-alpha-amino acid + H(+). In terms of biological role, an aminoacyl-tRNA editing enzyme that deacylates mischarged D-aminoacyl-tRNAs. Also deacylates mischarged glycyl-tRNA(Ala), protecting cells against glycine mischarging by AlaRS. Acts via tRNA-based rather than protein-based catalysis; rejects L-amino acids rather than detecting D-amino acids in the active site. By recycling D-aminoacyl-tRNA to D-amino acids and free tRNA molecules, this enzyme counteracts the toxicity associated with the formation of D-aminoacyl-tRNA entities in vivo and helps enforce protein L-homochirality. The chain is D-aminoacyl-tRNA deacylase from Albidiferax ferrireducens (strain ATCC BAA-621 / DSM 15236 / T118) (Rhodoferax ferrireducens).